A 256-amino-acid polypeptide reads, in one-letter code: Geranylgeranylglyceryl phosphate synthase (256 aa).

Mg(2+) contacts are provided by Asp28 and Ser53. Residues 172–178, 203–204, and 225–226 each bind sn-glycerol 1-phosphate; these read YLEAGSG, GG, and GT.

Belongs to the GGGP/HepGP synthase family. Group II subfamily. It depends on Mg(2+) as a cofactor.

It localises to the cytoplasm. The catalysed reaction is sn-glycerol 1-phosphate + (2E,6E,10E)-geranylgeranyl diphosphate = sn-3-O-(geranylgeranyl)glycerol 1-phosphate + diphosphate. Its pathway is membrane lipid metabolism; glycerophospholipid metabolism. Functionally, prenyltransferase that catalyzes the transfer of the geranylgeranyl moiety of geranylgeranyl diphosphate (GGPP) to the C3 hydroxyl of sn-glycerol-1-phosphate (G1P). This reaction is the first ether-bond-formation step in the biosynthesis of archaeal membrane lipids. In Methanococcus maripaludis (strain C6 / ATCC BAA-1332), this protein is Geranylgeranylglyceryl phosphate synthase.